An 83-amino-acid chain; its full sequence is Mu-theraphotoxin-Hhn2f (83 aa).

The signal sequence occupies residues 1 to 21 (MKASMFLALAGLVLLFVVGYA). Residues 22–48 (SESEEKEFPIELLSKIFAVDVFKGEER) constitute a propeptide that is removed on maturation. 3 disulfide bridges follow: C50/C65, C57/C70, and C64/C77. L81 bears the Leucine amide mark.

The protein belongs to the neurotoxin 10 (Hwtx-1) family. 15 (Hntx-3) subfamily. Monomer. Expressed by the venom gland.

It is found in the secreted. Functionally, lethal neurotoxin. Selectively blocks tetrodotoxin-sensitive voltage-gated sodium channels (Nav). Does not affect tetrodotoxin-resistant voltage-gated sodium channels or calcium channels. This chain is Mu-theraphotoxin-Hhn2f, found in Cyriopagopus hainanus (Chinese bird spider).